A 337-amino-acid polypeptide reads, in one-letter code: UDP-3-O-acylglucosamine N-acyltransferase (337 aa).

His-238 (proton acceptor) is an active-site residue.

This sequence belongs to the transferase hexapeptide repeat family. LpxD subfamily. As to quaternary structure, homotrimer.

It catalyses the reaction a UDP-3-O-[(3R)-3-hydroxyacyl]-alpha-D-glucosamine + a (3R)-hydroxyacyl-[ACP] = a UDP-2-N,3-O-bis[(3R)-3-hydroxyacyl]-alpha-D-glucosamine + holo-[ACP] + H(+). It participates in bacterial outer membrane biogenesis; LPS lipid A biosynthesis. Its function is as follows. Catalyzes the N-acylation of UDP-3-O-acylglucosamine using 3-hydroxyacyl-ACP as the acyl donor. Is involved in the biosynthesis of lipid A, a phosphorylated glycolipid that anchors the lipopolysaccharide to the outer membrane of the cell. The sequence is that of UDP-3-O-acylglucosamine N-acyltransferase from Xanthomonas oryzae pv. oryzae (strain MAFF 311018).